Consider the following 146-residue polypeptide: Deoxyuridine 5'-triphosphate nucleotidohydrolase (146 aa).

Substrate-binding positions include 65–67, Asn-78, and 82–84; these read RSG and TID.

It belongs to the dUTPase family. Mg(2+) serves as cofactor.

The enzyme catalyses dUTP + H2O = dUMP + diphosphate + H(+). It functions in the pathway pyrimidine metabolism; dUMP biosynthesis; dUMP from dCTP (dUTP route): step 2/2. Its function is as follows. This enzyme is involved in nucleotide metabolism: it produces dUMP, the immediate precursor of thymidine nucleotides and it decreases the intracellular concentration of dUTP so that uracil cannot be incorporated into DNA. The protein is Deoxyuridine 5'-triphosphate nucleotidohydrolase of Treponema pallidum subsp. pallidum (strain SS14).